A 350-amino-acid polypeptide reads, in one-letter code: Cytochrome c biogenesis protein CcsA (350 aa).

The next 8 membrane-spanning stretches (helical) occupy residues 23–43 (NVAFAISLGAMLFYWGGAAFP), 47–67 (LLAELGLAGMIGANLTMAALL), 82–102 (LYESLFFLAWGITALHLLALH), 108–128 (WVGVMTAPVVTGIVAFAALVL), 153–173 (VMLLAYAALLVGSLLSISFLI), 258–278 (LIGLGFPLLTIGIIAGAVWAN), 293–313 (WALITWLVFAAYLHARITKGW), and 319–339 (ALLASLGFGVVWVCYLGVNFL).

Belongs to the CcmF/CycK/Ccl1/NrfE/CcsA family. May interact with ccs1.

It is found in the cellular thylakoid membrane. Required during biogenesis of c-type cytochromes (cytochrome c6 and cytochrome f) at the step of heme attachment. This Synechococcus sp. (strain JA-2-3B'a(2-13)) (Cyanobacteria bacterium Yellowstone B-Prime) protein is Cytochrome c biogenesis protein CcsA.